The primary structure comprises 254 residues: Methyl-CpG-binding domain-containing protein 11 (254 aa).

Residues 4-74 enclose the MBD domain; the sequence is EEEVVSVELP…AEFDWTTSGT (71 aa). The interval 56–254 is disordered; that stretch reads KSHPGNPAIA…EKTAEGEATG (199 aa). Composition is skewed to basic and acidic residues over residues 80-97, 107-130, 151-162, and 178-254; these read RISE…EPPK, SKKD…KDTE, ETERVNDAKENI, and ESMK…EATG. Ser116 carries the post-translational modification Phosphoserine.

Expressed in leaves (around hydathodes), buds, flowers (carpels and pollen grains), stems (around nodes), siliques, mature seeds and roots.

It is found in the nucleus. Its function is as follows. Transcriptional regulator that binds DNA independently of its methylation status. Required during plant organogenesis and development. In Arabidopsis thaliana (Mouse-ear cress), this protein is Methyl-CpG-binding domain-containing protein 11 (MBD11).